A 161-amino-acid polypeptide reads, in one-letter code: MNPRRKKRLGLILALFVGISATVGLMLYALNQNMDLFYTPTELVNGKPDGTKPEVGQRLRIGGMVVAGSVVRDSNSLEVSFKVADVGPQVTVIYDGILPDLFREGQGIVAQGVLVDATTIKAHEVLAKHDEEYMPPEVAEAMKKTHEPLQYTEQQKQGTGQ.

The Cytoplasmic portion of the chain corresponds to 1-8; that stretch reads MNPRRKKR. The chain crosses the membrane as a helical; Signal-anchor for type II membrane protein span at residues 9-29; it reads LGLILALFVGISATVGLMLYA. At 30 to 161 the chain is on the periplasmic side; it reads LNQNMDLFYT…TEQQKQGTGQ (132 aa). Heme contacts are provided by His129 and Tyr133. Positions 142–161 are disordered; sequence MKKTHEPLQYTEQQKQGTGQ. A compositionally biased stretch (polar residues) spans 151-161; that stretch reads YTEQQKQGTGQ.

Belongs to the CcmE/CycJ family.

It is found in the cell inner membrane. Its function is as follows. Heme chaperone required for the biogenesis of c-type cytochromes. Transiently binds heme delivered by CcmC and transfers the heme to apo-cytochromes in a process facilitated by CcmF and CcmH. The protein is Cytochrome c-type biogenesis protein CcmE of Aliivibrio fischeri (strain MJ11) (Vibrio fischeri).